A 176-amino-acid chain; its full sequence is NAD(P)H-quinone oxidoreductase subunit 6, chloroplastic (176 aa).

A run of 5 helical transmembrane segments spans residues 10-30, 33-53, 60-80, 95-115, and 152-172; these read ILMLFGGFVLLLGGLGVVLLT, IYSAFSLGLVLVCISLFYFLL, VAQLLIYVGAINVLIIFAVMF, IGDGFTSIVCITIVFSLMTTI, and FYLPFELISIILLVSLIGAIT.

Belongs to the complex I subunit 6 family. As to quaternary structure, NDH is composed of at least 16 different subunits, 5 of which are encoded in the nucleus.

It localises to the plastid. Its subcellular location is the chloroplast thylakoid membrane. The catalysed reaction is a plastoquinone + NADH + (n+1) H(+)(in) = a plastoquinol + NAD(+) + n H(+)(out). It carries out the reaction a plastoquinone + NADPH + (n+1) H(+)(in) = a plastoquinol + NADP(+) + n H(+)(out). NDH shuttles electrons from NAD(P)H:plastoquinone, via FMN and iron-sulfur (Fe-S) centers, to quinones in the photosynthetic chain and possibly in a chloroplast respiratory chain. The immediate electron acceptor for the enzyme in this species is believed to be plastoquinone. Couples the redox reaction to proton translocation, and thus conserves the redox energy in a proton gradient. The polypeptide is NAD(P)H-quinone oxidoreductase subunit 6, chloroplastic (ndhG) (Lolium perenne (Perennial ryegrass)).